Here is a 427-residue protein sequence, read N- to C-terminus: Glutamate-1-semialdehyde 2,1-aminomutase (427 aa).

Lysine 265 is subject to N6-(pyridoxal phosphate)lysine.

It belongs to the class-III pyridoxal-phosphate-dependent aminotransferase family. HemL subfamily. Homodimer. Pyridoxal 5'-phosphate serves as cofactor.

It is found in the cytoplasm. The enzyme catalyses (S)-4-amino-5-oxopentanoate = 5-aminolevulinate. Its pathway is porphyrin-containing compound metabolism; protoporphyrin-IX biosynthesis; 5-aminolevulinate from L-glutamyl-tRNA(Glu): step 2/2. The polypeptide is Glutamate-1-semialdehyde 2,1-aminomutase (Burkholderia pseudomallei (strain 668)).